Here is a 152-residue protein sequence, read N- to C-terminus: Early glycoprotein GP48 (152 aa).

An N-terminal signal peptide occupies residues 1–25; that stretch reads MVMMLRTWRLLPMVLLAAYCYCVFG. N-linked (GlcNAc...) asparagine; by host glycosylation is found at N48, N53, N61, N69, N108, N112, N122, N139, and N148.

The protein belongs to the RL11 family. Post-translationally, N-glycosylated and possibly O-glycosylated.

It localises to the virion membrane. In Homo sapiens (Human), this protein is Early glycoprotein GP48 (UL4).